Here is a 181-residue protein sequence, read N- to C-terminus: Monofunctional chorismate mutase (181 aa).

The first 20 residues, 1 to 20 (MIRHIAIFLCSLLMCSTTFA), serve as a signal peptide directing secretion. In terms of domain architecture, Chorismate mutase spans 21–102 (DSVTSVSLGA…ASKAIQYRYL (82 aa)). The substrate site is built by arginine 38, lysine 49, aspartate 58, glutamate 62, and glutamine 98.

The protein localises to the periplasm. It catalyses the reaction chorismate = prephenate. It functions in the pathway metabolic intermediate biosynthesis; prephenate biosynthesis; prephenate from chorismate: step 1/1. In terms of biological role, catalyzes the Claisen rearrangement of chorismate to prephenate. This Salmonella typhimurium protein is Monofunctional chorismate mutase.